Here is a 119-residue protein sequence, read N- to C-terminus: Basic phospholipase A2 homolog 1 (119 aa).

Cystine bridges form between Cys11–Cys72, Cys27–Cys118, Cys29–Cys45, Cys44–Cys99, Cys51–Cys92, Cys61–Cys85, and Cys79–Cys90. The segment at 107 to 117 is important for membrane-damaging activities in eukaryotes and bacteria; heparin-binding; that stretch reads KENYNIDPKKR.

It belongs to the phospholipase A2 family. Group I subfamily. D49 sub-subfamily. In terms of tissue distribution, expressed by the venom gland.

The protein resides in the secreted. This is Basic phospholipase A2 homolog 1 from Notechis scutatus scutatus (Mainland tiger snake).